A 323-amino-acid polypeptide reads, in one-letter code: Calcium homeostasis modulator protein 2 (323 aa).

Topologically, residues 1–21 are cytoplasmic; it reads MAALIAENFRFLSLFFKSKDV. Residues 14–39 form a central pore region; that stretch reads LFFKSKDVMIFNGLVALGTVGSQELF. A helical membrane pass occupies residues 22-43; the sequence is MIFNGLVALGTVGSQELFTVVA. Topologically, residues 44-52 are extracellular; it reads FHCPCSPAR. Disulfide bonds link Cys46-Cys130 and Cys48-Cys162. Residues 53 to 76 traverse the membrane as a helical segment; it reads NYLYGLAAIGVPALALFLIGVILN. The Cytoplasmic portion of the chain corresponds to 77–101; the sequence is NHTWNLVAECQYRRTKNCSAAPNFL. The chain crosses the membrane as a helical span at residues 102–132; it reads LLSSIVGRAAVAPVTWSVISLLRGEAYVCAL. The Extracellular portion of the chain corresponds to 133–179; sequence SEFVNPHSLMVGERSFPVAHATEILARFPCGEGPANLSVFREEVSRR. Positions 145–152 are hemichannel docking; it reads ERSFPVAH. Residues 180 to 206 form a helical membrane-spanning segment; sequence LKYESQLFGWLLIGVVAILVFLTKCLK. Over 207 to 323 the chain is Cytoplasmic; it reads HYCSPLSYRQ…DHVEMSLLPS (117 aa). The tract at residues 214-251 is intersubunit interaction; the sequence is YRQEAYWAQYRANEDQLFQRTAEVHSRVLAANNVRRFF.

The protein belongs to the CALHM family. As to quaternary structure, homo-undecamer. Two undecameric hemichannels can assemble in a head-to-head manner to form a gap junction.

The protein localises to the cell membrane. It catalyses the reaction ATP(in) = ATP(out). Its function is as follows. Pore-forming subunit of Ca(2+) homeostasis modulator channels. Mediates ATP release from astrocytes and ATP-induced Ca(2+) influx in microglia thus regulating neuronal ATP and Ca(2+) homeostasis, synaptic transmission and neuroinflammatory response. May form intercellular gap junctions. The gating mechanism remains unknown. The protein is Calcium homeostasis modulator protein 2 (CALHM2) of Bos taurus (Bovine).